A 131-amino-acid polypeptide reads, in one-letter code: DNA-directed RNA polymerase subunit Rpo8 (131 aa).

The protein belongs to the archaeal Rpo8 RNA polymerase subunit family. Part of the 13-subunit RNA polymerase complex. Interacts with Rpo1N on the periphery of the clamp head.

It is found in the cytoplasm. The enzyme catalyses RNA(n) + a ribonucleoside 5'-triphosphate = RNA(n+1) + diphosphate. Functionally, DNA-dependent RNA polymerase (RNAP) catalyzes the transcription of DNA into RNA using the four ribonucleoside triphosphates as substrates. This is DNA-directed RNA polymerase subunit Rpo8 from Saccharolobus shibatae (strain ATCC 51178 / DSM 5389 / JCM 8931 / NBRC 15437 / B12) (Sulfolobus shibatae).